The following is a 374-amino-acid chain: Carbamoyl phosphate synthase small chain (374 aa).

Positions 1 to 185 are CPSase; the sequence is MKAILALEDG…DVSSGYKWSD (185 aa). The L-glutamine site is built by Ser-45, Gly-237, and Gly-239. In terms of domain architecture, Glutamine amidotransferase type-1 spans 189-374; it reads RLVLVDYGVK…RNLVKDATGK (186 aa). The active-site Nucleophile is the Cys-264. Residues Leu-265, Gln-268, Asn-306, Gly-308, and Phe-309 each contribute to the L-glutamine site. Catalysis depends on residues His-347 and Glu-349.

The protein belongs to the CarA family. As to quaternary structure, composed of two chains; the small (or glutamine) chain promotes the hydrolysis of glutamine to ammonia, which is used by the large (or ammonia) chain to synthesize carbamoyl phosphate. Tetramer of heterodimers (alpha,beta)4.

It carries out the reaction hydrogencarbonate + L-glutamine + 2 ATP + H2O = carbamoyl phosphate + L-glutamate + 2 ADP + phosphate + 2 H(+). It catalyses the reaction L-glutamine + H2O = L-glutamate + NH4(+). The protein operates within amino-acid biosynthesis; L-arginine biosynthesis; carbamoyl phosphate from bicarbonate: step 1/1. Its pathway is pyrimidine metabolism; UMP biosynthesis via de novo pathway; (S)-dihydroorotate from bicarbonate: step 1/3. In terms of biological role, small subunit of the glutamine-dependent carbamoyl phosphate synthetase (CPSase). CPSase catalyzes the formation of carbamoyl phosphate from the ammonia moiety of glutamine, carbonate, and phosphate donated by ATP, constituting the first step of 2 biosynthetic pathways, one leading to arginine and/or urea and the other to pyrimidine nucleotides. The small subunit (glutamine amidotransferase) binds and cleaves glutamine to supply the large subunit with the substrate ammonia. The sequence is that of Carbamoyl phosphate synthase small chain from Maridesulfovibrio salexigens (strain ATCC 14822 / DSM 2638 / NCIMB 8403 / VKM B-1763) (Desulfovibrio salexigens).